A 2376-amino-acid chain; its full sequence is Serine/threonine-protein kinase WNK1 (2376 aa).

2 disordered regions span residues 1-78 and 93-201; these read MSGG…EHRF and ELPG…QQDD. Composition is skewed to low complexity over residues 10 to 19 and 40 to 49; these read SSPPGSLFLS and GAAAADAGAG. S15 and S19 each carry phosphoserine. Basic and acidic residues predominate over residues 50 to 66; it reads RTEEYRRRRHTMDKDSR. At T60 the chain carries Phosphothreonine. Low complexity predominate over residues 125–158; that stretch reads TPAVAHVAQQPPAAATPGEPAAAVPAAASAPGSA. S172 is modified (phosphoserine). The Protein kinase domain maps to 219–477; sequence LKFDIEIGRG…IKDLLNHAFF (259 aa). ATP is bound at residue S229. 2 residues coordinate chloride: F281 and L297. Residues 299 to 302 and K349 contribute to the ATP site; that span reads TELM. D366 serves as the catalytic Proton acceptor. Positions 367 and 369 each coordinate chloride. Phosphoserine; by autocatalysis occurs at positions 376 and 380. Positions 486–553 are autoinhibitory domain; it reads ELAEEDDGEK…VCEGDHKTMA (68 aa). Residues 571–586 are compositionally biased toward basic and acidic residues; the sequence is QLVREEQEKRKQEESS. Disordered stretches follow at residues 571 to 641, 701 to 799, and 1026 to 1118; these read QLVR…QLQY, AQPH…PVPT, and TTSS…SRPK. Composition is skewed to low complexity over residues 587–601 and 614–624; these read LKQQGEQQSSASQAG and AAATTSASVST. Residues 627-637 are interaction with KLHL3; it reads EPEEPEADQHQ. Residues 708–752 are compositionally biased toward low complexity; the sequence is PPSSMAQGQSQGQPSSSSLTGIPSSQPVQHSQQQQGVQQTAPSQQ. The segment covering 753 to 766 has biased composition (polar residues); it reads TVQYSLPQTSAPSE. Residues 1045–1057 show a composition bias toward pro residues; the sequence is PPEPVPAAPPQPT. Positions 1079-1089 are enriched in polar residues; that stretch reads SDGNENVPSSS. A compositionally biased stretch (basic residues) spans 1097–1118; that stretch reads IKRHYRKSVRSRSRHEKTSRPK. The short motif at 1257-1260 is the RFXV motif 1 element; it reads RFIV. A Phosphoserine modification is found at S1261. Disordered regions lie at residues 1459–1478 and 1734–1770; these read STAAPGAKPPPVSSQQVSGS and STIPAVKPGTAPSKPPSTKPPVLPLGTELPAGTPPSE. Residues 1746-1756 are compositionally biased toward pro residues; that stretch reads SKPPSTKPPVL. Residues 1853–1856 carry the RFXV motif 2 motif; it reads RFQV. Residues 1862-1878 are compositionally biased toward basic and acidic residues; it reads DTQKEGKNKSEDVKSVH. Residues 1862 to 1942 form a disordered region; the sequence is DTQKEGKNKS…QPTKVGRFQV (81 aa). Positions 1881–1899 are enriched in low complexity; that stretch reads SSTSESSVLSSSSPESTLV. Short sequence motifs (RFXV motif) lie at residues 1939–1942 and 1951–1954; these read RFQV and RFSV. Phosphoserine is present on residues S1972, S1996, S2005, S2006, S2021, S2023, and S2026. Disordered stretches follow at residues 1991-2033 and 2110-2239; these read EKPE…LCSK and AAAP…RKGT. A compositionally biased stretch (basic residues) spans 2116–2128; it reads GRRRRPTKSKGSK. Positions 2129 to 2141 are enriched in low complexity; sequence SSRSSSLGNKSPG. 2 stretches are compositionally biased toward polar residues: residues 2146-2161 and 2169-2193; these read LSGQSTATVLHPQQTL and ETGQNQLLQPLKPSPSSDNLYSAFT. The span at 2207-2223 shows a compositional bias: low complexity; sequence GQGTSSTNTVGGTVSSQ. Over residues 2224–2238 the composition is skewed to polar residues; sequence AAQAQPPTMTSSRKG. An amphipathic alpha-helix region spans residues 2235 to 2255; that stretch reads SRKGTFTDDLHKLVDNWARDA. Phosphoserine occurs at positions 2264, 2280, 2364, and 2366.

This sequence belongs to the protein kinase superfamily. Ser/Thr protein kinase family. WNK subfamily. In terms of assembly, interacts with WNK3. Interacts with WNK4; inhibiting the activity of WNK4. Interacts with SGK1; promoting its activation. Associates with the mTORC2 complex. Interacts with UVRAG. Interacts (via amphipathic alpha-helix region) with EMC2; promoting the ER membrane protein complex assembly. The cofactor is Mg(2+). In terms of processing, autophosphorylated at Ser-376 and Ser-380, promoting its activity. Autophosphorylation at Ser-380 is inhibited by intracellular calcium. Phosphorylation at Thr-60 increases ability to activate SGK1. Ubiquitinated by the BCR(KLHL3) complex, leading to its degradation. Also ubiquitinated by the BCR(KLHL2) complex.

It is found in the cytoplasm. Its subcellular location is the nucleus. The protein localises to the cytoskeleton. It localises to the spindle. It carries out the reaction L-seryl-[protein] + ATP = O-phospho-L-seryl-[protein] + ADP + H(+). The catalysed reaction is L-threonyl-[protein] + ATP = O-phospho-L-threonyl-[protein] + ADP + H(+). Activated in response to hyperosmotic stress: cell shrinkage promotes formation of a membraneless compartment that concentrates WNK1 with its substrates, OXSR1/OSR1 and STK39/SPAK. Activation requires autophosphorylation of Ser-380 and, to a lower extent, Ser-376. Autophosphorylation and subsequent activation is inhibited by increases in intracellular ionic strength: Cl(-) potently inhibits WNK1 kinase activity via direct binding. Also inhibited by K(+) ions. Functionally, serine/threonine-protein kinase component of the WNK1-SPAK/OSR1 kinase cascade, which acts as a key regulator of blood pressure and regulatory volume increase by promoting ion influx. WNK1 mediates regulatory volume increase in response to hyperosmotic stress by acting as a molecular crowding sensor, which senses cell shrinkage and mediates formation of a membraneless compartment by undergoing liquid-liquid phase separation. The membraneless compartment concentrates WNK1 with its substrates, OXSR1/OSR1 and STK39/SPAK, promoting WNK1-dependent phosphorylation and activation of downstream kinases OXSR1/OSR1 and STK39/SPAK. Following activation, OXSR1/OSR1 and STK39/SPAK catalyze phosphorylation of ion cotransporters SLC12A1/NKCC2, SLC12A2/NKCC1, SLC12A5/KCC2 and SLC12A6/KCC3, regulating their activity. Phosphorylation of Na-K-Cl cotransporters SLC12A2/NKCC1 and SLC12A2/NKCC1 promote their activation and ion influx; simultaneously, phosphorylation of K-Cl cotransporters SLC12A5/KCC2 and SLC12A6/KCC3 inhibit their activity, blocking ion efflux. Also acts as a regulator of angiogenesis in endothelial cells via activation of OXSR1/OSR1 and STK39/SPAK: activation of OXSR1/OSR1 regulates chemotaxis and invasion, while STK39/SPAK regulates endothelial cell proliferation. Also acts independently of the WNK1-SPAK/OSR1 kinase cascade by catalyzing phosphorylation of other substrates, such as SYT2, PCF11 and NEDD4L. Mediates phosphorylation of SYT2, regulating SYT2 association with phospholipids and membrane-binding. Regulates mRNA export in the nucleus by mediating phosphorylation of PCF11, thereby decreasing the association between PCF11 and POLR2A/RNA polymerase II and promoting mRNA export to the cytoplasm. Acts as a negative regulator of autophagy. Required for the abscission step during mitosis, independently of the WNK1-SPAK/OSR1 kinase cascade. May also play a role in actin cytoskeletal reorganization. Also acts as a scaffold protein independently of its protein kinase activity: negatively regulates cell membrane localization of various transporters and channels, such as SLC4A4, SLC26A6, SLC26A9, TRPV4 and CFTR. Involved in the regulation of epithelial Na(+) channel (ENaC) by promoting activation of SGK1 in a kinase-independent manner: probably acts as a scaffold protein that promotes the recruitment of SGK1 to the mTORC2 complex in response to chloride, leading to mTORC2-dependent phosphorylation and activation of SGK1. Acts as an assembly factor for the ER membrane protein complex independently of its protein kinase activity: associates with EMC2 in the cytoplasm via its amphipathic alpha-helix, and prevents EMC2 ubiquitination and subsequent degradation, thereby promoting EMC2 stabilization. In Sus scrofa (Pig), this protein is Serine/threonine-protein kinase WNK1.